A 319-amino-acid polypeptide reads, in one-letter code: Geranylgeranyl pyrophosphate synthase (319 aa).

Residues lysine 42, arginine 45, and histidine 74 each coordinate isopentenyl diphosphate. Mg(2+) is bound by residues aspartate 81 and aspartate 85. Arginine 90 provides a ligand contact to dimethylallyl diphosphate. Isopentenyl diphosphate is bound at residue arginine 91. Positions 172, 173, 210, 226, and 236 each coordinate dimethylallyl diphosphate.

Belongs to the FPP/GGPP synthase family. Homodimer. Mg(2+) is required as a cofactor.

The catalysed reaction is isopentenyl diphosphate + dimethylallyl diphosphate = (2E)-geranyl diphosphate + diphosphate. It carries out the reaction isopentenyl diphosphate + (2E)-geranyl diphosphate = (2E,6E)-farnesyl diphosphate + diphosphate. It catalyses the reaction isopentenyl diphosphate + (2E,6E)-farnesyl diphosphate = (2E,6E,10E)-geranylgeranyl diphosphate + diphosphate. It participates in isoprenoid biosynthesis; geranyl diphosphate biosynthesis; geranyl diphosphate from dimethylallyl diphosphate and isopentenyl diphosphate: step 1/1. The protein operates within isoprenoid biosynthesis; farnesyl diphosphate biosynthesis; farnesyl diphosphate from geranyl diphosphate and isopentenyl diphosphate: step 1/1. It functions in the pathway isoprenoid biosynthesis; geranylgeranyl diphosphate biosynthesis; geranylgeranyl diphosphate from farnesyl diphosphate and isopentenyl diphosphate: step 1/1. Catalyzes the addition of 3 molecules of isopentenyl diphosphate (IPP) onto dimethylallyl diphosphate (DMAPP) to form geranylgeranyl pyrophosphate (GGPP). Catalyzes the synthesis of geranylgeranyl pyrophosphate as a major product and of farnesyl pyrophosphate in smaller amounts. This Geoglobus acetivorans protein is Geranylgeranyl pyrophosphate synthase.